The sequence spans 247 residues: Protein GrpE (247 aa).

2 disordered regions span residues Met-1 to Asp-68 and Pro-226 to Asn-247. 3 stretches are compositionally biased toward basic and acidic residues: residues Lys-7–Gln-35, Thr-43–Glu-54, and Glu-228–Asn-247.

This sequence belongs to the GrpE family. Homodimer.

It localises to the cytoplasm. Its function is as follows. Participates actively in the response to hyperosmotic and heat shock by preventing the aggregation of stress-denatured proteins, in association with DnaK and GrpE. It is the nucleotide exchange factor for DnaK and may function as a thermosensor. Unfolded proteins bind initially to DnaJ; upon interaction with the DnaJ-bound protein, DnaK hydrolyzes its bound ATP, resulting in the formation of a stable complex. GrpE releases ADP from DnaK; ATP binding to DnaK triggers the release of the substrate protein, thus completing the reaction cycle. Several rounds of ATP-dependent interactions between DnaJ, DnaK and GrpE are required for fully efficient folding. The chain is Protein GrpE from Treponema denticola (strain ATCC 35405 / DSM 14222 / CIP 103919 / JCM 8153 / KCTC 15104).